A 62-amino-acid polypeptide reads, in one-letter code: Photosystem II reaction center protein Z (62 aa).

Helical transmembrane passes span 8–28 and 41–61; these read AVFA…VVFA and FSGT…NSLI.

This sequence belongs to the PsbZ family. As to quaternary structure, PSII is composed of 1 copy each of membrane proteins PsbA, PsbB, PsbC, PsbD, PsbE, PsbF, PsbH, PsbI, PsbJ, PsbK, PsbL, PsbM, PsbT, PsbY, PsbZ, Psb30/Ycf12, at least 3 peripheral proteins of the oxygen-evolving complex and a large number of cofactors. It forms dimeric complexes.

It is found in the plastid. It localises to the chloroplast thylakoid membrane. Functionally, may control the interaction of photosystem II (PSII) cores with the light-harvesting antenna, regulates electron flow through the 2 photosystem reaction centers. PSII is a light-driven water plastoquinone oxidoreductase, using light energy to abstract electrons from H(2)O, generating a proton gradient subsequently used for ATP formation. In Daucus carota (Wild carrot), this protein is Photosystem II reaction center protein Z.